A 338-amino-acid chain; its full sequence is MKIYYDKDCNMGVLKGKKVAIIGYGSQGHAHANNLKDSGIDVVVGLRADSASVKKATEAGLTVLPTSEAVKIADVVMILLPDETQGDIYREEIGPFLKQGAYLAFSHGFNIHFGQIVPRPDVNVIMIAPKGPGHLVRHEYTKGGGVPSLIAIHHDPAGNSRDVALAYASANGGGRAGIIETSFKEETETDLFGEQAVLCGGISALIQAGFETLVEAGYAPEMAYFECLHETKLIVDLIYEGGIANMRYSISNTAEYGDLTRGPRVVTDETKKEMKRILDEIQTGQFAKEWMLENKANKPVFTALRRKGAEHQIEEVGARLRSMMSWIGASKIVDKAKN.

The KARI N-terminal Rossmann domain maps to 1 to 181 (MKIYYDKDCN…GGGRAGIIET (181 aa)). Residues 24–27 (YGSQ), R47, S50, S52, and 82–85 (DETQ) contribute to the NADP(+) site. H107 is a catalytic residue. NADP(+) is bound at residue G133. One can recognise a KARI C-terminal knotted domain in the interval 182-327 (SFKEETETDL…ARLRSMMSWI (146 aa)). Positions 190, 194, 226, and 230 each coordinate Mg(2+). Substrate is bound at residue S251.

This sequence belongs to the ketol-acid reductoisomerase family. Requires Mg(2+) as cofactor.

The enzyme catalyses (2R)-2,3-dihydroxy-3-methylbutanoate + NADP(+) = (2S)-2-acetolactate + NADPH + H(+). It carries out the reaction (2R,3R)-2,3-dihydroxy-3-methylpentanoate + NADP(+) = (S)-2-ethyl-2-hydroxy-3-oxobutanoate + NADPH + H(+). Its pathway is amino-acid biosynthesis; L-isoleucine biosynthesis; L-isoleucine from 2-oxobutanoate: step 2/4. It participates in amino-acid biosynthesis; L-valine biosynthesis; L-valine from pyruvate: step 2/4. Involved in the biosynthesis of branched-chain amino acids (BCAA). Catalyzes an alkyl-migration followed by a ketol-acid reduction of (S)-2-acetolactate (S2AL) to yield (R)-2,3-dihydroxy-isovalerate. In the isomerase reaction, S2AL is rearranged via a Mg-dependent methyl migration to produce 3-hydroxy-3-methyl-2-ketobutyrate (HMKB). In the reductase reaction, this 2-ketoacid undergoes a metal-dependent reduction by NADPH to yield (R)-2,3-dihydroxy-isovalerate. This chain is Ketol-acid reductoisomerase (NADP(+)), found in Geobacter metallireducens (strain ATCC 53774 / DSM 7210 / GS-15).